We begin with the raw amino-acid sequence, 250 residues long: Ribosomal RNA small subunit methyltransferase J (250 aa).

Residues 101-102, 117-118, 153-154, and Asp171 contribute to the S-adenosyl-L-methionine site; these read RD, ER, and SS.

Belongs to the methyltransferase superfamily. RsmJ family.

It localises to the cytoplasm. The catalysed reaction is guanosine(1516) in 16S rRNA + S-adenosyl-L-methionine = N(2)-methylguanosine(1516) in 16S rRNA + S-adenosyl-L-homocysteine + H(+). Its function is as follows. Specifically methylates the guanosine in position 1516 of 16S rRNA. In Shigella dysenteriae serotype 1 (strain Sd197), this protein is Ribosomal RNA small subunit methyltransferase J.